A 336-amino-acid polypeptide reads, in one-letter code: tRNA N6-adenosine threonylcarbamoyltransferase (336 aa).

The Fe cation site is built by H114 and H118. Substrate-binding positions include 136–140, D169, G182, D186, and N275; that span reads LVSGG. D301 is a binding site for Fe cation.

The protein belongs to the KAE1 / TsaD family. Requires Fe(2+) as cofactor.

Its subcellular location is the cytoplasm. It catalyses the reaction L-threonylcarbamoyladenylate + adenosine(37) in tRNA = N(6)-L-threonylcarbamoyladenosine(37) in tRNA + AMP + H(+). In terms of biological role, required for the formation of a threonylcarbamoyl group on adenosine at position 37 (t(6)A37) in tRNAs that read codons beginning with adenine. Is involved in the transfer of the threonylcarbamoyl moiety of threonylcarbamoyl-AMP (TC-AMP) to the N6 group of A37, together with TsaE and TsaB. TsaD likely plays a direct catalytic role in this reaction. This Streptococcus sanguinis (strain SK36) protein is tRNA N6-adenosine threonylcarbamoyltransferase.